Here is a 303-residue protein sequence, read N- to C-terminus: Dihydroorotate dehydrogenase B (NAD(+)), catalytic subunit (303 aa).

FMN is bound by residues Ser-21 and 45-46; that span reads KG. Substrate-binding positions include Lys-45 and 69 to 73; that span reads NCIGL. The FMN site is built by Asn-98 and Asn-126. Asn-126 contributes to the substrate binding site. Catalysis depends on Cys-129, which acts as the Nucleophile. Lys-165 and Val-191 together coordinate FMN. 192-193 is a substrate binding site; the sequence is NT. FMN is bound by residues Gly-217 and 243 to 244; that span reads GG.

It belongs to the dihydroorotate dehydrogenase family. Type 1 subfamily. Heterotetramer of 2 PyrK and 2 PyrD type B subunits. The cofactor is FMN.

It is found in the cytoplasm. It catalyses the reaction (S)-dihydroorotate + NAD(+) = orotate + NADH + H(+). Its pathway is pyrimidine metabolism; UMP biosynthesis via de novo pathway; orotate from (S)-dihydroorotate (NAD(+) route): step 1/1. Catalyzes the conversion of dihydroorotate to orotate with NAD(+) as electron acceptor. This is Dihydroorotate dehydrogenase B (NAD(+)), catalytic subunit (pyrD) from Brachyspira hyodysenteriae (strain ATCC 49526 / WA1).